Consider the following 303-residue polypeptide: Probable WRKY transcription factor 30 (303 aa).

A disordered region spans residues 65–92 (DQVSQGGGSPKSDDSDQEPLVIKSSKKS). Positions 107–175 (GVDRTLDDGF…YRGIHSCSQA (69 aa)) form a DNA-binding region, WRKY. A compositionally biased stretch (low complexity) spans 266–278 (SGSASHSASNSPS). Residues 266–291 (SGSASHSASNSPSTVPLESPFESYDP) form a disordered region.

It belongs to the WRKY group III family. Interacts with WRKY53, WRKY54 and WRKY70.

The protein localises to the nucleus. In terms of biological role, transcription factor. Interacts specifically with the W box (5'-(T)TGAC[CT]-3'), a frequently occurring elicitor-responsive cis-acting element. In Arabidopsis thaliana (Mouse-ear cress), this protein is Probable WRKY transcription factor 30.